The following is a 160-amino-acid chain: Phosphopantetheine adenylyltransferase (160 aa).

Belongs to the eukaryotic CoaD family.

The protein localises to the cytoplasm. The enzyme catalyses (R)-4'-phosphopantetheine + ATP + H(+) = 3'-dephospho-CoA + diphosphate. Its pathway is cofactor biosynthesis; coenzyme A biosynthesis. Its function is as follows. Reversibly transfers an adenylyl group from ATP to 4'-phosphopantetheine, yielding dephospho-CoA (dPCoA) and pyrophosphate. The polypeptide is Phosphopantetheine adenylyltransferase (Pyrococcus furiosus (strain ATCC 43587 / DSM 3638 / JCM 8422 / Vc1)).